The primary structure comprises 140 residues: D-ribose pyranase (140 aa).

The active-site Proton donor is the H20. Substrate-binding positions include D28, H99, and 121–123 (YSS).

The protein belongs to the RbsD / FucU family. RbsD subfamily. Homodecamer.

The protein resides in the cytoplasm. It carries out the reaction beta-D-ribopyranose = beta-D-ribofuranose. It functions in the pathway carbohydrate metabolism; D-ribose degradation; D-ribose 5-phosphate from beta-D-ribopyranose: step 1/2. Functionally, catalyzes the interconversion of beta-pyran and beta-furan forms of D-ribose. The sequence is that of D-ribose pyranase from Pseudothermotoga lettingae (strain ATCC BAA-301 / DSM 14385 / NBRC 107922 / TMO) (Thermotoga lettingae).